The chain runs to 347 residues: Lipoyl synthase (347 aa).

Residues cysteine 77, cysteine 82, cysteine 88, cysteine 103, cysteine 107, cysteine 110, and serine 317 each contribute to the [4Fe-4S] cluster site. The region spanning 89-306 (FADGTATFMI…MDYGKKIGFF (218 aa)) is the Radical SAM core domain.

This sequence belongs to the radical SAM superfamily. Lipoyl synthase family. [4Fe-4S] cluster is required as a cofactor.

It is found in the cytoplasm. It carries out the reaction [[Fe-S] cluster scaffold protein carrying a second [4Fe-4S](2+) cluster] + N(6)-octanoyl-L-lysyl-[protein] + 2 oxidized [2Fe-2S]-[ferredoxin] + 2 S-adenosyl-L-methionine + 4 H(+) = [[Fe-S] cluster scaffold protein] + N(6)-[(R)-dihydrolipoyl]-L-lysyl-[protein] + 4 Fe(3+) + 2 hydrogen sulfide + 2 5'-deoxyadenosine + 2 L-methionine + 2 reduced [2Fe-2S]-[ferredoxin]. It participates in protein modification; protein lipoylation via endogenous pathway; protein N(6)-(lipoyl)lysine from octanoyl-[acyl-carrier-protein]: step 2/2. Catalyzes the radical-mediated insertion of two sulfur atoms into the C-6 and C-8 positions of the octanoyl moiety bound to the lipoyl domains of lipoate-dependent enzymes, thereby converting the octanoylated domains into lipoylated derivatives. The protein is Lipoyl synthase of Psychrobacter arcticus (strain DSM 17307 / VKM B-2377 / 273-4).